Consider the following 132-residue polypeptide: MGAGVGVAGCTRGHRNWVPSQLPPREIKAGVSLAVVTEFAWVLAPRPKRATASALGTESPRFLDRPDFFDYPDSDQARLLAVAQFIGEKPIVFINSGSSPGLFHHILVGLLVVAFFFLLFQFCTHINFQKGA.

Residues 100 to 120 (PGLFHHILVGLLVVAFFFLLF) form a helical membrane-spanning segment.

As to expression, testis-specific.

Its subcellular location is the cell membrane. Functionally, may play a role in sperm-oocyte fusion during fertilization. The chain is Fertilization-influencing membrane protein from Homo sapiens (Human).